The chain runs to 888 residues: Tyrosine-protein kinase receptor UFO (888 aa).

A signal peptide spans 1 to 18; sequence MGRVPLAWWLALCCWGCA. The interval 19–86 is interaction with GAS6; it reads AHKDTQTEAG…QTQVPLGEDW (68 aa). Over 19-445 the chain is Extracellular; sequence AHKDTQTEAG…PPRAFSWPWW (427 aa). Ig-like C2-type domains are found at residues 30 to 122 and 133 to 216; these read PFVG…TFVS and PYFL…ATIT. N37 carries an N-linked (GlcNAc...) asparagine glycan. C50 and C111 are joined by a disulfide. 2 N-linked (GlcNAc...) asparagine glycosylation sites follow: N151 and N192. Residues C154 and C199 are joined by a disulfide bond. Fibronectin type-III domains follow at residues 221 to 325 and 330 to 422; these read RPHH…TTEG and PPEN…PWRP. Residues N333, N339, and N395 are each glycosylated (N-linked (GlcNAc...) asparagine). Residues 446–466 traverse the membrane as a helical segment; that stretch reads YVLLGALVAAACVLILALFLV. Residues 467–888 lie on the Cytoplasmic side of the membrane; sequence HRRKKETRYG…PAPPGQEDGA (422 aa). In terms of domain architecture, Protein kinase spans 530-801; it reads VALGKTLGEG…ELREDLENTL (272 aa). Residues 536-544 and K561 contribute to the ATP site; that span reads LGEGEFGAV. D666 functions as the Proton acceptor in the catalytic mechanism. Phosphotyrosine; by autocatalysis is present on residues Y697, Y773, and Y815. A disordered region spans residues 820-846; the sequence is EGGSHLEPRGAAGGADPPTQPDPKDSC. A Phosphotyrosine; by autocatalysis modification is found at Y860. Residues 865–888 form a disordered region; that stretch reads STAPGPTLSADRGCPAPPGQEDGA.

The protein belongs to the protein kinase superfamily. Tyr protein kinase family. AXL/UFO subfamily. Heterodimer and heterotetramer with ligand GAS6. Interacts with CBL, GRB2, LCK, NCK2, PIK3R1, PIK3R2, PIK3R3, PLCG1, SOCS1 and TNS2. Part of a complex including AXL, TNK2 and GRB2, in which GRB2 promotes AXL recruitment by TNK2. Post-translationally, monoubiquitinated upon GAS6-binding. A very small proportion of the receptor could be subjected to polyubiquitination in a very transient fashion. Phosphorylated at tyrosine residues by autocatalysis, which activates kinase activity. In distinct substructures of a broad spectrum of developing tissues (in the late embryogenesis). In cells forming organ capsules as well as in connective tissue structures (in adult).

It is found in the cell membrane. The catalysed reaction is L-tyrosyl-[protein] + ATP = O-phospho-L-tyrosyl-[protein] + ADP + H(+). Its activity is regulated as follows. Activated by GAS6-binding and subsequent autophosphorylation. Its function is as follows. Receptor tyrosine kinase that transduces signals from the extracellular matrix into the cytoplasm by binding growth factor GAS6 and which is thus regulating many physiological processes including cell survival, cell proliferation, migration and differentiation. Ligand binding at the cell surface induces dimerization and autophosphorylation of AXL. Following activation by ligand, AXL binds and induces tyrosine phosphorylation of PI3-kinase subunits PIK3R1, PIK3R2 and PIK3R3; but also GRB2, PLCG1, LCK and PTPN11. Other downstream substrate candidates for AXL are CBL, NCK2, SOCS1 and TNS2. Recruitment of GRB2 and phosphatidylinositol 3 kinase regulatory subunits by AXL leads to the downstream activation of the AKT kinase. GAS6/AXL signaling plays a role in various processes such as endothelial cell survival during acidification by preventing apoptosis, optimal cytokine signaling during human natural killer cell development, hepatic regeneration, gonadotropin-releasing hormone neuron survival and migration, platelet activation, or regulation of thrombotic responses. Also plays an important role in inhibition of Toll-like receptors (TLRs)-mediated innate immune response. The protein is Tyrosine-protein kinase receptor UFO (Axl) of Mus musculus (Mouse).